A 118-amino-acid chain; its full sequence is Immunoglobulin heavy variable 4-30-2 (118 aa).

An N-terminal signal peptide occupies residues 1–19 (MKHLWFFLLLVAAPRWVLS). The interval 20–44 (QLQLQESGSGLVKPSQTLSLTCAVS) is framework-1. The Ig-like domain maps to 20–118 (QLQLQESGSG…ADTAVYYCAR (99 aa)). An intrachain disulfide couples Cys-41 to Cys-116. A complementarity-determining-1 region spans residues 45–54 (GGSISSGGYS). Positions 55–71 (WSWIRQPPGKGLEWIGY) are framework-2. A complementarity-determining-2 region spans residues 72 to 78 (IYHSGST). The interval 79-116 (YYNPSLKSRVTISVDRSKNQFSLKLSSVTAADTAVYYC) is framework-3. Residues 117-118 (AR) are complementarity-determining-3.

In terms of assembly, immunoglobulins are composed of two identical heavy chains and two identical light chains; disulfide-linked.

It localises to the secreted. Its subcellular location is the cell membrane. Functionally, v region of the variable domain of immunoglobulin heavy chains that participates in the antigen recognition. Immunoglobulins, also known as antibodies, are membrane-bound or secreted glycoproteins produced by B lymphocytes. In the recognition phase of humoral immunity, the membrane-bound immunoglobulins serve as receptors which, upon binding of a specific antigen, trigger the clonal expansion and differentiation of B lymphocytes into immunoglobulins-secreting plasma cells. Secreted immunoglobulins mediate the effector phase of humoral immunity, which results in the elimination of bound antigens. The antigen binding site is formed by the variable domain of one heavy chain, together with that of its associated light chain. Thus, each immunoglobulin has two antigen binding sites with remarkable affinity for a particular antigen. The variable domains are assembled by a process called V-(D)-J rearrangement and can then be subjected to somatic hypermutations which, after exposure to antigen and selection, allow affinity maturation for a particular antigen. The sequence is that of Immunoglobulin heavy variable 4-30-2 from Homo sapiens (Human).